The sequence spans 274 residues: MGDTASVSEHHESPTVTIVPLHRSHALVAEQQLFQWLKRFKLLMEVYHGLVWQLACTLTVCLLAWLAFPDVQGQCANGIVPALSSIVPVSTLAMLRGFAEFRPHTTNFAHLTVACLLINTGITVCTGFCGERRVIGLSFALVMVFFVLCSGLTYLAGNNPTRWKVIGIGYGWSVIVFYLLLYFSPVLWVSKIYSGLYVLVVTAASAVLIYETLDLIYQRGTLSKNSVCVSVVLYTIVMSLLNMSVAIFSGHVWVQQYAEKHGGRIDGVSLLSLL.

7 consecutive transmembrane segments (helical) span residues 49–69, 75–95, 108–128, 134–154, 168–188, 196–216, and 228–248; these read GLVW…LAFP, CANG…LAML, FAHL…CTGF, VIGL…GLTY, IGYG…PVLW, LYVL…LDLI, and CVSV…VAIF.

It belongs to the cytomegalovirus US12 family.

Its subcellular location is the host membrane. The protein is Transmembrane protein US18 (US18) of Human cytomegalovirus (strain Merlin) (HHV-5).